Reading from the N-terminus, the 148-residue chain is Snaclec 4 (148 aa).

The signal sequence occupies residues 1–23 (MGRFIFVSFSLLVVFFSLSGTEA). The C-type lectin domain maps to 34-148 (YDQNCYKAFE…DTQFRLQEPG (115 aa)).

This sequence belongs to the snaclec family. In terms of assembly, heterodimer; disulfide-linked. Contains disulfide bonds. Expressed by the venom gland.

The protein resides in the secreted. Its function is as follows. Interferes with one step of hemostasis (modulation of platelet aggregation, or coagulation cascade, for example). This chain is Snaclec 4, found in Echis pyramidum leakeyi (Leakey's carpet viper).